Reading from the N-terminus, the 410-residue chain is Cysteine desulfurase IscS (410 aa).

Residues alanine 80–threonine 81, asparagine 160, glutamine 188, and serine 208–histidine 210 contribute to the pyridoxal 5'-phosphate site. Position 211 is an N6-(pyridoxal phosphate)lysine (lysine 211). Threonine 248 serves as a coordination point for pyridoxal 5'-phosphate. Cysteine 334 functions as the Cysteine persulfide intermediate in the catalytic mechanism. Cysteine 334 serves as a coordination point for [2Fe-2S] cluster.

The protein belongs to the class-V pyridoxal-phosphate-dependent aminotransferase family. NifS/IscS subfamily. As to quaternary structure, homodimer. Forms a heterotetramer with IscU, interacts with other sulfur acceptors. Pyridoxal 5'-phosphate serves as cofactor.

It is found in the cytoplasm. It carries out the reaction (sulfur carrier)-H + L-cysteine = (sulfur carrier)-SH + L-alanine. The protein operates within cofactor biosynthesis; iron-sulfur cluster biosynthesis. Its function is as follows. Master enzyme that delivers sulfur to a number of partners involved in Fe-S cluster assembly, tRNA modification or cofactor biosynthesis. Catalyzes the removal of elemental sulfur atoms from cysteine to produce alanine. Functions as a sulfur delivery protein for Fe-S cluster synthesis onto IscU, an Fe-S scaffold assembly protein, as well as other S acceptor proteins. This chain is Cysteine desulfurase IscS, found in Rickettsia bellii (strain OSU 85-389).